A 72-amino-acid chain; its full sequence is Cytochrome c oxidase subunit 2 (72 aa).

The Mitochondrial intermembrane portion of the chain corresponds to 1-14; the sequence is MAHPSQLGFQDAAS. Residues 15–45 form a helical membrane-spanning segment; the sequence is PVMEELLHFHDHALMIVFLISTLVLYIIVAM. Residues 46-72 are Mitochondrial matrix-facing; sequence VSTKLTNKYXLDSQEIEVIWTXLPAVI.

This sequence belongs to the cytochrome c oxidase subunit 2 family. As to quaternary structure, component of the cytochrome c oxidase (complex IV, CIV), a multisubunit enzyme composed of 14 subunits. The complex is composed of a catalytic core of 3 subunits MT-CO1, MT-CO2 and MT-CO3, encoded in the mitochondrial DNA, and 11 supernumerary subunits COX4I, COX5A, COX5B, COX6A, COX6B, COX6C, COX7A, COX7B, COX7C, COX8 and NDUFA4, which are encoded in the nuclear genome. The complex exists as a monomer or a dimer and forms supercomplexes (SCs) in the inner mitochondrial membrane with NADH-ubiquinone oxidoreductase (complex I, CI) and ubiquinol-cytochrome c oxidoreductase (cytochrome b-c1 complex, complex III, CIII), resulting in different assemblies (supercomplex SCI(1)III(2)IV(1) and megacomplex MCI(2)III(2)IV(2)). Found in a complex with TMEM177, COA6, COX18, COX20, SCO1 and SCO2. Interacts with TMEM177 in a COX20-dependent manner. Interacts with COX20. Interacts with COX16. Cu cation is required as a cofactor.

The protein resides in the mitochondrion inner membrane. It catalyses the reaction 4 Fe(II)-[cytochrome c] + O2 + 8 H(+)(in) = 4 Fe(III)-[cytochrome c] + 2 H2O + 4 H(+)(out). Functionally, component of the cytochrome c oxidase, the last enzyme in the mitochondrial electron transport chain which drives oxidative phosphorylation. The respiratory chain contains 3 multisubunit complexes succinate dehydrogenase (complex II, CII), ubiquinol-cytochrome c oxidoreductase (cytochrome b-c1 complex, complex III, CIII) and cytochrome c oxidase (complex IV, CIV), that cooperate to transfer electrons derived from NADH and succinate to molecular oxygen, creating an electrochemical gradient over the inner membrane that drives transmembrane transport and the ATP synthase. Cytochrome c oxidase is the component of the respiratory chain that catalyzes the reduction of oxygen to water. Electrons originating from reduced cytochrome c in the intermembrane space (IMS) are transferred via the dinuclear copper A center (CU(A)) of subunit 2 and heme A of subunit 1 to the active site in subunit 1, a binuclear center (BNC) formed by heme A3 and copper B (CU(B)). The BNC reduces molecular oxygen to 2 water molecules using 4 electrons from cytochrome c in the IMS and 4 protons from the mitochondrial matrix. The chain is Cytochrome c oxidase subunit 2 (mt-co2) from Gomphosus varius (Bird wrasse).